The chain runs to 500 residues: Anthranilate synthase component 1 (500 aa).

L-tryptophan-binding positions include serine 49 and 276 to 278; that span reads PFM. 311-312 lines the chorismate pocket; that stretch reads GT. Glutamate 338 contacts Mg(2+). Chorismate contacts are provided by residues tyrosine 426, arginine 446, 460–462, and glycine 462; that span reads GGG. Glutamate 475 is a Mg(2+) binding site.

The protein belongs to the anthranilate synthase component I family. Heterotetramer consisting of two non-identical subunits: a beta subunit (TrpG) and a large alpha subunit (TrpE). The cofactor is Mg(2+).

The catalysed reaction is chorismate + L-glutamine = anthranilate + pyruvate + L-glutamate + H(+). The protein operates within amino-acid biosynthesis; L-tryptophan biosynthesis; L-tryptophan from chorismate: step 1/5. With respect to regulation, feedback inhibited by tryptophan. Functionally, part of a heterotetrameric complex that catalyzes the two-step biosynthesis of anthranilate, an intermediate in the biosynthesis of L-tryptophan. In the first step, the glutamine-binding beta subunit (TrpG) of anthranilate synthase (AS) provides the glutamine amidotransferase activity which generates ammonia as a substrate that, along with chorismate, is used in the second step, catalyzed by the large alpha subunit of AS (TrpE) to produce anthranilate. In the absence of TrpG, TrpE can synthesize anthranilate directly from chorismate and high concentrations of ammonia. This is Anthranilate synthase component 1 (trpE) from Cereibacter sphaeroides (strain ATCC 17023 / DSM 158 / JCM 6121 / CCUG 31486 / LMG 2827 / NBRC 12203 / NCIMB 8253 / ATH 2.4.1.) (Rhodobacter sphaeroides).